Consider the following 21-residue polypeptide: Outer membrane protein P2 (21 aa).

In terms of assembly, disulfide bond interactions within and between MOMP molecules and other components form high molecular-weight oligomers.

Its subcellular location is the cell outer membrane. Structural rigidity of the outer membrane of elementary bodies and porin forming, permitting diffusion of solutes through the intracellular reticulate body membrane. Binds carcinoembryonic antigen (CEA). This is Outer membrane protein P2 from Glaesserella parasuis (Haemophilus parasuis).